We begin with the raw amino-acid sequence, 103 residues long: Large ribosomal subunit protein bL21 (103 aa).

Belongs to the bacterial ribosomal protein bL21 family. Part of the 50S ribosomal subunit. Contacts protein L20.

Functionally, this protein binds to 23S rRNA in the presence of protein L20. The chain is Large ribosomal subunit protein bL21 from Legionella pneumophila (strain Lens).